Consider the following 345-residue polypeptide: tRNA-specific 2-thiouridylase MnmA (345 aa).

ATP is bound by residues Ala-6–Ser-13 and Leu-32. Cys-100 serves as the catalytic Nucleophile. The cysteines at positions 100 and 197 are disulfide-linked. Gly-124 contributes to the ATP binding site. An interaction with tRNA region spans residues Arg-146 to Gln-148. Cys-197 acts as the Cysteine persulfide intermediate in catalysis.

Belongs to the MnmA/TRMU family.

The protein resides in the cytoplasm. The enzyme catalyses S-sulfanyl-L-cysteinyl-[protein] + uridine(34) in tRNA + AH2 + ATP = 2-thiouridine(34) in tRNA + L-cysteinyl-[protein] + A + AMP + diphosphate + H(+). Functionally, catalyzes the 2-thiolation of uridine at the wobble position (U34) of tRNA, leading to the formation of s(2)U34. This Acidiphilium cryptum (strain JF-5) protein is tRNA-specific 2-thiouridylase MnmA.